The primary structure comprises 346 residues: UDP-N-acetylenolpyruvoylglucosamine reductase (346 aa).

The 172-residue stretch at 23-194 folds into the FAD-binding PCMH-type domain; it reads FDVRARLACR…VSVTFRLPKV (172 aa). Arginine 170 is a catalytic residue. Catalysis depends on serine 246, which acts as the Proton donor. Residue glutamate 342 is part of the active site.

This sequence belongs to the MurB family. FAD serves as cofactor.

It localises to the cytoplasm. The enzyme catalyses UDP-N-acetyl-alpha-D-muramate + NADP(+) = UDP-N-acetyl-3-O-(1-carboxyvinyl)-alpha-D-glucosamine + NADPH + H(+). Its pathway is cell wall biogenesis; peptidoglycan biosynthesis. Its function is as follows. Cell wall formation. The protein is UDP-N-acetylenolpyruvoylglucosamine reductase of Paraburkholderia phymatum (strain DSM 17167 / CIP 108236 / LMG 21445 / STM815) (Burkholderia phymatum).